We begin with the raw amino-acid sequence, 463 residues long: ATP-dependent rRNA helicase SPB4 (463 aa).

A Q motif motif is present at residues 4 to 32 (KGIEDVAMNGRLKKEIEENGFGKMTEVQL). The 171-residue stretch at 35 to 205 (IPEVLKGKDV…RVFLRNPVSI (171 aa)) folds into the Helicase ATP-binding domain. 48-55 (SPTGTGKT) lines the ATP pocket. The short motif at 153–156 (DEAD) is the DEAD box element. One can recognise a Helicase C-terminal domain in the interval 226–382 (KLLVLMDIVT…DIKSMISPEL (157 aa)). The disordered stretch occupies residues 444 to 463 (RDGKKRALPKKKYRKKRAIK). Over residues 446 to 463 (GKKRALPKKKYRKKRAIK) the composition is skewed to basic residues.

The protein belongs to the DEAD box helicase family. DDX55/SPB4 subfamily. As to quaternary structure, component of pre-60S ribosomal complexes.

It is found in the nucleus. The protein resides in the nucleolus. It carries out the reaction ATP + H2O = ADP + phosphate + H(+). Its function is as follows. ATP-binding RNA helicase involved in the biogenesis of 60S ribosomal subunits. Binds 90S pre-ribosomal particles and dissociates from pre-60S ribosomal particles after processing of 27SB pre-rRNA. Required for the normal formation of 18S rRNA through the processing of pre-rRNAs at sites A0, A1 and A2, and the normal formation of 25S and 5.8S rRNAs through the processing of pre-rRNAs at sites C1 and C2. The chain is ATP-dependent rRNA helicase SPB4 from Encephalitozoon cuniculi (strain GB-M1) (Microsporidian parasite).